Reading from the N-terminus, the 520-residue chain is Glycosyl hydrolase family 109 protein 5 (520 aa).

A signal peptide spans 1–27; that stretch reads MRTFKSLMISLCMGTTLCMCLPQTTTA. NAD(+) contacts are provided by residues 77 to 78, aspartate 99, 147 to 150, 167 to 168, and asparagine 196; these read MR, WLHH, and EV. Substrate contacts are provided by residues tyrosine 225, arginine 248, 260–263, and tyrosine 338; that span reads YATH. Tyrosine 260 contacts NAD(+).

This sequence belongs to the Gfo/Idh/MocA family. Glycosyl hydrolase 109 subfamily. It depends on NAD(+) as a cofactor.

Glycosidase. The chain is Glycosyl hydrolase family 109 protein 5 from Phocaeicola vulgatus (strain ATCC 8482 / DSM 1447 / JCM 5826 / CCUG 4940 / NBRC 14291 / NCTC 11154) (Bacteroides vulgatus).